Reading from the N-terminus, the 341-residue chain is Basic membrane protein B (341 aa).

A signal peptide spans Met1–Ser14. Cys15 carries the N-palmitoyl cysteine lipid modification. Cys15 is lipidated: S-diacylglycerol cysteine.

Belongs to the BMP lipoprotein family. Monomer.

It is found in the cell inner membrane. In terms of biological role, may be part of an ABC-type nucleoside uptake system involved in the purine salvage pathway. This Borrelia garinii subsp. bavariensis (strain ATCC BAA-2496 / DSM 23469 / PBi) (Borreliella bavariensis) protein is Basic membrane protein B (bmpB).